Here is a 403-residue protein sequence, read N- to C-terminus: Ribosomal RNA large subunit methyltransferase I (403 aa).

Residues 9–88 (YPRLVLSKGR…ESIDIAFFTR (80 aa)) form the PUA domain.

The protein belongs to the methyltransferase superfamily. RlmI family.

It is found in the cytoplasm. The catalysed reaction is cytidine(1962) in 23S rRNA + S-adenosyl-L-methionine = 5-methylcytidine(1962) in 23S rRNA + S-adenosyl-L-homocysteine + H(+). Specifically methylates the cytosine at position 1962 (m5C1962) of 23S rRNA. In Salmonella typhi, this protein is Ribosomal RNA large subunit methyltransferase I.